The chain runs to 94 residues: Co-chaperonin GroES (94 aa).

This sequence belongs to the GroES chaperonin family. In terms of assembly, heptamer of 7 subunits arranged in a ring. Interacts with the chaperonin GroEL.

It localises to the cytoplasm. Its function is as follows. Together with the chaperonin GroEL, plays an essential role in assisting protein folding. The GroEL-GroES system forms a nano-cage that allows encapsulation of the non-native substrate proteins and provides a physical environment optimized to promote and accelerate protein folding. GroES binds to the apical surface of the GroEL ring, thereby capping the opening of the GroEL channel. This is Co-chaperonin GroES from Lactobacillus delbrueckii subsp. bulgaricus (strain ATCC BAA-365 / Lb-18).